The sequence spans 247 residues: Coiled-coil domain-containing protein 124 homolog (247 aa).

The interval 1-146 is disordered; that stretch reads MGGKKFGTNS…TTTTGSDDHE (146 aa). Residues 8–85 adopt a coiled-coil conformation; that stretch reads TNSKAEEARS…QEDKEIKERY (78 aa). Residues 11–114 are compositionally biased toward basic and acidic residues; sequence KAEEARSKKA…EQKQREKELA (104 aa). Low complexity predominate over residues 122-140; that stretch reads VVVVPTTTTTTTTTTTTTT.

This sequence belongs to the CCDC124 family. Associates with translationally inactive ribosomes in the nonrotated state.

Ribosome-binding protein involved in ribosome hibernation: associates with translationally inactive ribosomes and stabilizes the nonrotated conformation of the 80S ribosome, thereby promoting ribosome preservation and storage. The polypeptide is Coiled-coil domain-containing protein 124 homolog (Dictyostelium discoideum (Social amoeba)).